We begin with the raw amino-acid sequence, 204 residues long: Somatotropin (204 aa).

The signal sequence occupies residues Met1–Ser17. Gln18 is subject to Pyrrolidone carboxylic acid. His36 contacts Zn(2+). Cys69 and Cys177 form a disulfide bridge. Position 186 (Glu186) interacts with Zn(2+). Cys194 and Cys202 form a disulfide bridge.

This sequence belongs to the somatotropin/prolactin family.

Its subcellular location is the secreted. In terms of biological role, growth hormone plays an important role in growth control and involved in the regulation of several anabolic processes. The chain is Somatotropin (gh) from Perca flavescens (American yellow perch).